The chain runs to 274 residues: Putative hydro-lyase SAV_6940 (274 aa).

This sequence belongs to the D-glutamate cyclase family.

This Streptomyces avermitilis (strain ATCC 31267 / DSM 46492 / JCM 5070 / NBRC 14893 / NCIMB 12804 / NRRL 8165 / MA-4680) protein is Putative hydro-lyase SAV_6940.